A 548-amino-acid polypeptide reads, in one-letter code: Organic cation transporter protein (548 aa).

At 1–22 (MGYDDVITHLGEFGPYQKRIYY) the chain is on the cytoplasmic side. A helical membrane pass occupies residues 23–43 (LLCLPAIVCAFHKLAGVFLLA). Residues 44–127 (KPDFRCALPY…TEWNLVCSRS (84 aa)) are Extracellular-facing. 4 N-linked (GlcNAc...) asparagine glycosylation sites follow: Asn-55, Asn-67, Asn-89, and Asn-97. Residues 128–148 (LLSATSDSLFMLGVLLGSLIF) traverse the membrane as a helical segment. The Cytoplasmic segment spans residues 149–158 (GQMSDKLGRK). The chain crosses the membrane as a helical span at residues 159–179 (PTFFASLVLQLIFGVLAAVAP). The Extracellular segment spans residues 180–189 (EYFSYTISRM). Residues 190-210 (IVGATTSGVFLVAYVIALEMV) form a helical membrane-spanning segment. Residues 211-219 (GSSYRLFAG) are Cytoplasmic-facing. The helical transmembrane segment at 220–240 (VAMQMFFSVGFMLTAGFAYFI) threads the bilayer. Topologically, residues 241 to 244 (HDWR) are extracellular. A helical membrane pass occupies residues 245-265 (WLQIAITLPGLLFLCYYWIIP). Residues 266–337 (ESARWLLMKG…LLRYPNLRRK (72 aa)) are Cytoplasmic-facing. Residues 338-358 (TLLIFFDWFVNSGVYYGLSWN) form a helical membrane-spanning segment. At 359–366 (TNNLGGNQ) the chain is on the extracellular side. A helical membrane pass occupies residues 367-387 (LVNFMISGAVEIPGYTLLLFT). At 388 to 395 (LNRWGRRS) the chain is on the cytoplasmic side. Residues 396–416 (ILCGTMMVAGISLLATIFVPS) form a helical membrane-spanning segment. Residues 417–419 (DMN) lie on the Extracellular side of the membrane. Residues 420-440 (WLIVACAMIGKLAITSSYGTI) form a helical membrane-spanning segment. Residues 441-453 (YIFSAEQFPTVVR) lie on the Cytoplasmic side of the membrane. Residues 454 to 474 (NVGLGASSMVARVGGILAPYL) traverse the membrane as a helical segment. The Extracellular portion of the chain corresponds to 475-482 (KLLGEIWR). The chain crosses the membrane as a helical span at residues 483–503 (PLPLIICGALSLTAGLLSLLL). Residues 504–548 (PETLNKPMPETIEDGENFGKKPAPQETAEEGGTQELSGMLNGKSG) lie on the Cytoplasmic side of the membrane. The tract at residues 512-548 (PETIEDGENFGKKPAPQETAEEGGTQELSGMLNGKSG) is disordered.

This sequence belongs to the major facilitator (TC 2.A.1) superfamily. Organic cation transporter (TC 2.A.1.19) family. Expressed in embryos and adults at low level. Expressed at higher level in third instar larvae.

It is found in the membrane. Probably transports organic cations. In Drosophila melanogaster (Fruit fly), this protein is Organic cation transporter protein (Orct).